A 1638-amino-acid chain; its full sequence is Ciliary rootlet coiled-coil protein 2 (1638 aa).

A compositionally biased stretch (polar residues) spans M1–G20. Disordered regions lie at residues M1–L21, R39–S92, A396–H423, and T1168–E1213. Residues S67–P82 are compositionally biased toward low complexity. The stretch at T85 to E144 forms a coiled coil. Polar residues predominate over residues S406–S421. Coiled coils occupy residues L426 to E1234 and L1281 to A1315. The span at R1180–V1193 shows a compositional bias: basic and acidic residues. Disordered regions lie at residues R1338–D1383 and A1506–S1551. Positions S1349 to Y1371 are enriched in polar residues. Coiled coils occupy residues R1412 to A1506 and R1542 to E1576.

The protein belongs to the rootletin family.

This Mus musculus (Mouse) protein is Ciliary rootlet coiled-coil protein 2.